A 363-amino-acid polypeptide reads, in one-letter code: Protein Wnt-5 (363 aa).

The N-terminal stretch at 1 to 27 (MVGMTRIQSAEPVWILFVLTLYSSVLM) is a signal peptide. N-linked (GlcNAc...) asparagine glycans are attached at residues Asn-48 and Asn-98. Disulfide bonds link Cys-88–Cys-99, Cys-137–Cys-145, Cys-147–Cys-165, Cys-221–Cys-235, Cys-223–Cys-230, Cys-292–Cys-323, Cys-308–Cys-318, Cys-322–Cys-362, Cys-338–Cys-353, Cys-340–Cys-350, and Cys-345–Cys-346. The O-palmitoleoyl serine; by PORCN moiety is linked to residue Ser-227.

Belongs to the Wnt family. Palmitoleoylation is required for efficient binding to frizzled receptors. Depalmitoleoylation leads to Wnt signaling pathway inhibition.

The protein resides in the secreted. The protein localises to the extracellular space. Its subcellular location is the extracellular matrix. In terms of biological role, ligand for members of the frizzled family of seven transmembrane receptors. Probable developmental protein. May be a signaling molecule which affects the development of discrete regions of tissues. Is likely to signal over only few cell diameters. The polypeptide is Protein Wnt-5 (WNT5) (Halocynthia roretzi (Sea squirt)).